A 130-amino-acid polypeptide reads, in one-letter code: MAQVQYYGTGRRKKSTARVRLVPGTGNVTINGRDAQDYFPYETQLLILNQPLAATETQGTYDVLVNVDGGGFTGQAGAIRHGIARALLQADPEYRSTLKSEGYLTRDARMKERKKYGLKKARRAPQFSKR.

Belongs to the universal ribosomal protein uS9 family.

This is Small ribosomal subunit protein uS9 from Oceanobacillus iheyensis (strain DSM 14371 / CIP 107618 / JCM 11309 / KCTC 3954 / HTE831).